Reading from the N-terminus, the 147-residue chain is Cyanate hydratase (147 aa).

Catalysis depends on residues Arg88, Glu91, and Ser114.

This sequence belongs to the cyanase family.

The catalysed reaction is cyanate + hydrogencarbonate + 3 H(+) = NH4(+) + 2 CO2. Catalyzes the reaction of cyanate with bicarbonate to produce ammonia and carbon dioxide. The protein is Cyanate hydratase of Cupriavidus necator (strain ATCC 17699 / DSM 428 / KCTC 22496 / NCIMB 10442 / H16 / Stanier 337) (Ralstonia eutropha).